The following is a 326-amino-acid chain: 3-dehydrosphinganine reductase TSC10A (326 aa).

At 1–7 (MAAISPL) the chain is on the lumenal side. A helical transmembrane segment spans residues 8-28 (FLLFLIPIIPLSLLAILALIV). The Cytoplasmic segment spans residues 29-264 (RPRPIKIPIK…KAMDGIKAGN (236 aa)). NADPH contacts are provided by Gly-46, Ser-48, Ser-49, Gly-50, Arg-71, Lys-75, and Asp-97. The GXSXG motif lies at 46-50 (GGSSG). The active-site Proton donor is Ser-174. The active-site Proton acceptor is the Tyr-188. 2 residues coordinate NADP(+): Tyr-188 and Lys-192. The active-site Lowers pKa of active site Tyr is the Lys-192. Residues 265-285 (FTVSCNFEGFLLSLATTGMSP) form a helical membrane-spanning segment. The Lumenal segment spans residues 286–288 (QRS). Residues 289–309 (FWLAFLEVITAGPIRLIALFF) traverse the membrane as a helical segment. The Cytoplasmic portion of the chain corresponds to 310–326 (QWDWYKAIEKWSKTKTK).

Belongs to the short-chain dehydrogenases/reductases (SDR) family. As to expression, expressed in roots, leaves, stems, flowers and siliques.

The protein localises to the endoplasmic reticulum membrane. The catalysed reaction is sphinganine + NADP(+) = 3-oxosphinganine + NADPH + H(+). It participates in lipid metabolism; sphingolipid metabolism. In terms of biological role, catalyzes the reduction of 3'-oxosphinganine (3-ketodihydrosphingosine/KDS) to sphinganine (dihydrosphingosine/DHS), the second step of de novo sphingolipid biosynthesis. In plants, sphingolipids seems to play a critical role in mineral ion homeostasis, most likely through their involvement in the ion transport functionalities of membrane systems in the root. Lacks stereospecificity and can also produce L-threo-DHS in addition to D-erythro-DHS. The polypeptide is 3-dehydrosphinganine reductase TSC10A (TSC10A) (Arabidopsis thaliana (Mouse-ear cress)).